The chain runs to 262 residues: Lectin (262 aa).

The N-terminal stretch at 1 to 21 is a signal peptide; that stretch reads MASSVLLVLSLFLVLLLTQAS. Residues asparagine 53, asparagine 82, asparagine 100, asparagine 129, and asparagine 205 are each glycosylated (N-linked (GlcNAc...) asparagine).

The protein belongs to the leguminous lectin family.

This metalloglycoprotein, containing Ca(2+), Mn(2+), binds glycoconjugates containing terminal non-reducing alpha-D-GalNAc residues. In Phaseolus lunatus (Lima bean), this protein is Lectin.